Consider the following 252-residue polypeptide: Transcriptional regulatory protein HptR (252 aa).

The Response regulatory domain occupies 3-118 (KVVICDDERI…QLEVILGRLV (116 aa)). Residue aspartate 55 is modified to 4-aspartylphosphate. Residues 153-250 (NQIVDQIKQS…QMSPSDYCKQ (98 aa)) form the HTH araC/xylS-type domain. DNA-binding regions (H-T-H motif) lie at residues 170–191 (SDLI…KDHV) and 217–240 (HYEI…KKYL).

Phosphorylated by HptS.

Its subcellular location is the cytoplasm. In terms of biological role, member of the two-component regulatory system HptS/HptR that regulates genes involved in hexose phosphate transport system in response to changes in extracellular phosphate sources. Activates uhpT expression to facilitate glucose-6-phosphate/G6P utilization by directly binding to its promoter. Antagonizes CcpA-dependent transcription of a subset of CcpA-regulated genes involved in antibiotic susceptibility. The polypeptide is Transcriptional regulatory protein HptR (hptR) (Staphylococcus aureus (strain NCTC 8325 / PS 47)).